The primary structure comprises 483 residues: MKTLNRRDFPGAQYPDRIIQFGEGNFLRAFVDWQIDLLNEHTDLNAGIVVVRPIATDFPPSLNTQDGLYTTIIRGLNEQGEAVSDARLIRSVNREISAYADFDAFLRLAHNPEMRFVFSNTTEAGISYHAGDRFDDAPPVSYPAKLTRLLFERYQHFAGAADKGWVIIPCELIDYNGEALQALVLRYASEWELPQAFITWLTSANTFCSTLVDRIVTGYPRDEVAALEAQTGYKDAFLDTAEHFYLFVIQGPASLAAELRLDKLPLNVRIVDDIKPYKERKVAILNGAHTALVPVAFQAGIDTVGEAMNDAEICAFVEKAIYDEIIPVLDLPRDELVSFASAVTGRFRNPYIKHQLLSIALNGMTKYRTRILPQLLAGQKAHGALPPRLTFALAALIAFYRGERDGESYPVQDDADWISRYQTLWARHRDGQMSTRELVTAVLSVADHWQQDLSQTPGLVELVTADLDAILTCGMRDAVKPLC.

18-29 (IIQFGEGNFLRA) is an NAD(+) binding site.

This sequence belongs to the mannitol dehydrogenase family. UxaB subfamily.

The catalysed reaction is D-altronate + NAD(+) = keto-D-tagaturonate + NADH + H(+). Its pathway is carbohydrate metabolism; pentose and glucuronate interconversion. The protein is Altronate oxidoreductase of Klebsiella pneumoniae subsp. pneumoniae (strain ATCC 700721 / MGH 78578).